The chain runs to 504 residues: MSFSVDVLANIAIELQRGIGHQDRFQRLITTLRQVLECDASALLRYDSRQFIPLAIDGLAKDVLGRRFALEGHPRLEAIARAGDVVRFPADSELPDPYDGLIPGQESLKVHACVGLPLFAGQNLIGALTLDGMQPDQFDVFSDEELRLIAALAAGALSNALLIEQLESQNMMPGDATPFEAVKQTQMIGLSPGMTQLKKEIEIVAASDLNVLISGETGTGKELVAKAIHEASPRAVNPLVYLNCAALPESVAESELFGHVKGAFTGAISNRSGKFEMADNGTLFLDEIGELSLALQAKLLRVLQYGDIQRVGDDRSLRVDVRVLAATNRDLREEVLAGRFRADLFHRLSVFPLSVPPLRERGDDVILLAGYFCEQCRLRLGLSRVVLSAGARNLLQHYSFPGNVRELEHAIHRAVVLSRATRSGDEVILEAQHFAFPEVTLPPPEAAAVPVVKQNLREATEAFQRETIRQALAQNHHNWAACARMLETDVANLHRLAKRLGLKD.

Asp57 bears the 4-aspartylphosphate mark. The 230-residue stretch at 187 to 416 (MIGLSPGMTQ…LEHAIHRAVV (230 aa)) folds into the Sigma-54 factor interaction domain. ATP-binding positions include 215–222 (GETGTGKE) and 278–287 (ADNGTLFLDE). A DNA-binding region (H-T-H motif) is located at residues 479 to 498 (WAACARMLETDVANLHRLAK).

It functions in the pathway nitrogen metabolism; nitric oxide reduction. Required for the expression of anaerobic nitric oxide (NO) reductase, acts as a transcriptional activator for at least the norVW operon. Activation also requires sigma-54. This is Anaerobic nitric oxide reductase transcription regulator NorR from Escherichia coli O139:H28 (strain E24377A / ETEC).